A 4083-amino-acid chain; its full sequence is Dynein axonemal heavy chain 3 (4083 aa).

Disordered stretches follow at residues 1–37 (MSDT…VSAN) and 111–132 (DKTS…PSKK). Residues 1-1357 (MSDTNCSAQK…HVQMITTEAL (1357 aa)) are stem. 2 coiled-coil regions span residues 1026 to 1052 (IKPI…AWLK) and 1108 to 1133 (RMTE…YLEK). AAA stretches follow at residues 1358–1579 (YGYE…VLTA), 1639–1870 (EALN…LHCK), 2003–2251 (TIPA…VIQG), and 2362–2613 (EFNS…LLRH). ATP is bound by residues 1396–1403 (GPAGTGKT), 1677–1684 (GDPMGGKT), 2041–2048 (GPTGTGKS), and 2401–2408 (GIGGSGRQ). The interval 2628–2927 (FKTLLNSKRQ…NSLEKNIEIC (300 aa)) is stalk. The stretch at 2651 to 2714 (QKLEFASSQV…DEKEANAAAA (64 aa)) forms a coiled coil. AAA regions lie at residues 3012 to 3242 (LGDP…EISE) and 3455 to 3679 (IQNF…QIQM).

It belongs to the dynein heavy chain family. In terms of assembly, consists of at least two heavy chains and a number of intermediate and light chains.

Its subcellular location is the cytoplasm. It is found in the cytoskeleton. The protein localises to the cilium axoneme. Its function is as follows. Force generating protein of respiratory cilia. Produces force towards the minus ends of microtubules. Dynein has ATPase activity; the force-producing power stroke is thought to occur on release of ADP. Involved in sperm motility; implicated in sperm flagellar assembly. In Mus musculus (Mouse), this protein is Dynein axonemal heavy chain 3 (Dnah3).